A 254-amino-acid chain; its full sequence is MEGRIRVTEFLLSVPAIGTTKTQDALRRLGIAPSKRLGGLGRHQRLRLRVFLIEREERPVRRRKHLVVLAGPTAVGKGTVSAYIRENYPEVLLSVSATTRSPRPGEVDGVNYYFVDDAAFDRMIAAGDLLEHATVHNAYRYGTPRAPIEKALDDGRSVLLEIDLQGARQVRASMPEARLIFLLPPTWEELVRRLTGRGTEDAAEQQRRLETAKVELAAQNEFDHRVVNHTVADAAREVVDLMMVRPAPVRPSTA.

The 180-residue stretch at 64 to 243 folds into the Guanylate kinase-like domain; that stretch reads KHLVVLAGPT…AAREVVDLMM (180 aa). 71-78 contributes to the ATP binding site; it reads GPTAVGKG.

It belongs to the guanylate kinase family.

It is found in the cytoplasm. The enzyme catalyses GMP + ATP = GDP + ADP. In terms of biological role, essential for recycling GMP and indirectly, cGMP. This Leifsonia xyli subsp. xyli (strain CTCB07) protein is Guanylate kinase.